Reading from the N-terminus, the 220-residue chain is Ribose-5-phosphate isomerase A (220 aa).

Residues 28 to 31 (TGST), 81 to 84 (DGAD), and 94 to 97 (KGGG) each bind substrate. The Proton acceptor role is filled by E103. A substrate-binding site is contributed by K121.

This sequence belongs to the ribose 5-phosphate isomerase family. Homodimer.

The catalysed reaction is aldehydo-D-ribose 5-phosphate = D-ribulose 5-phosphate. It participates in carbohydrate degradation; pentose phosphate pathway; D-ribose 5-phosphate from D-ribulose 5-phosphate (non-oxidative stage): step 1/1. Catalyzes the reversible conversion of ribose-5-phosphate to ribulose 5-phosphate. This chain is Ribose-5-phosphate isomerase A, found in Aromatoleum aromaticum (strain DSM 19018 / LMG 30748 / EbN1) (Azoarcus sp. (strain EbN1)).